Reading from the N-terminus, the 448-residue chain is tRNA(Ile)-lysidine synthase (448 aa).

29–34 (SGGVDS) provides a ligand contact to ATP.

It belongs to the tRNA(Ile)-lysidine synthase family.

Its subcellular location is the cytoplasm. The catalysed reaction is cytidine(34) in tRNA(Ile2) + L-lysine + ATP = lysidine(34) in tRNA(Ile2) + AMP + diphosphate + H(+). Functionally, ligates lysine onto the cytidine present at position 34 of the AUA codon-specific tRNA(Ile) that contains the anticodon CAU, in an ATP-dependent manner. Cytidine is converted to lysidine, thus changing the amino acid specificity of the tRNA from methionine to isoleucine. The sequence is that of tRNA(Ile)-lysidine synthase from Azoarcus sp. (strain BH72).